A 906-amino-acid chain; its full sequence is Peroxisomal hydratase-dehydrogenase-epimerase (906 aa).

Short-chain dehydrogenase like regions lie at residues 5–228 and 319–532; these read DFKD…SSAE and SLKD…GTDD. NADP(+) contacts are provided by Ile-13, Lys-52, Asn-98, and Lys-131. Active-site proton donor residues include Ser-149 and Tyr-163. NADP(+) is bound by residues Tyr-163 and Lys-167. The active-site Proton acceptor is Tyr-163. The active-site Lowers pKa of active site Tyr is Lys-167. Tyr-467 acts as the Proton acceptor in catalysis. The interval 600-633 is disordered; the sequence is AVGGDDDDDDEDEEEDEGDEEEDEEDEEEDDPVW. Positions 603–630 are enriched in acidic residues; that stretch reads GDDDDDDEDEEEDEGDEEEDEEDEEEDD. (3R)-3-hydroxydecanoyl-CoA-binding residues include His-699, Gly-700, Lys-729, Tyr-757, Asp-808, Asn-810, Gly-831, Phe-856, Thr-857, and Gly-858. The 112-residue stretch at 782-893 folds into the MaoC-like domain; it reads APKRAPDYQV…VVDRGTIAIN (112 aa). The Microbody targeting signal motif lies at 904–906; it reads AKI.

The protein belongs to the short-chain dehydrogenases/reductases (SDR) family. In terms of assembly, monomer.

The protein localises to the peroxisome. The catalysed reaction is a (3R)-3-hydroxyacyl-CoA = a (2E)-enoyl-CoA + H2O. It catalyses the reaction a (3R)-3-hydroxyacyl-CoA + NAD(+) = a 3-oxoacyl-CoA + NADH + H(+). It functions in the pathway lipid metabolism; fatty acid beta-oxidation. Functionally, second trifunctional enzyme acting on the beta-oxidation pathway for fatty acids, possessing hydratase-dehydrogenase-epimerase activities. Converts trans-2-enoyl-CoA via D-3-hydroxyacyl-CoA to 3-ketoacyl-CoA. This is Peroxisomal hydratase-dehydrogenase-epimerase from Candida tropicalis (Yeast).